The chain runs to 1039 residues: Probable calcium-transporting ATPase 9, plasma membrane-type (1039 aa).

Topologically, residues 1–175 (MEKLDRYLQE…FVWDALQDMT (175 aa)) are cytoplasmic. 2 helical membrane passes run 176-196 (LIILMVCALLSVAVGLATEGW) and 199-219 (GMYDGLGIILSIFLVVMVTAV). Residues 220–250 (SDYKQSLQFKELDNEKKKIFIHVTRDGRRQK) lie on the Cytoplasmic side of the membrane. The next 2 helical transmembrane spans lie at 251 to 271 (ISIYDLVVGDIVHLSIGDQVP) and 353 to 373 (VATIIGKIGLVFAILTFLVLL). At 374–406 (VRFLIDKGMTVGLLKWYSTDALTIVNYFATAVT) the chain is on the cytoplasmic side. Residues 407 to 427 (IIVVAVPEGLPLAVTLSLAFA) form a helical membrane-spanning segment. Aspartate 456 serves as the catalytic 4-aspartylphosphate intermediate. Residues aspartate 758 and aspartate 762 each coordinate Mg(2+). A helical transmembrane segment spans residues 825–845 (IVALVINFVSACIIGSAPLTA). Topologically, residues 846 to 847 (VQ) are cytoplasmic. The next 2 membrane-spanning stretches (helical) occupy residues 848 to 868 (LLWVNMIMDTLGALALATEPP) and 892 to 912 (NIMGQSLYQLFVLGALMFGGE). At 913–960 (RLLNIKGADSKSIINTLIFNSFVFCQVFNEINSREMQKINVFRGIISN) the chain is on the cytoplasmic side. 2 consecutive transmembrane segments (helical) span residues 961-981 (WIFIAVIAATVAFQVVIIEFL) and 995-1015 (WLLSVGLGSISLIVGVILKCI). The Cytoplasmic portion of the chain corresponds to 1016-1039 (PVGSGETSATPNGYRPLANGPDDI).

This sequence belongs to the cation transport ATPase (P-type) (TC 3.A.3) family. Type IIB subfamily.

The protein localises to the membrane. The enzyme catalyses Ca(2+)(in) + ATP + H2O = Ca(2+)(out) + ADP + phosphate + H(+). Its activity is regulated as follows. Activated by calmodulin. Functionally, this magnesium-dependent enzyme catalyzes the hydrolysis of ATP coupled with the translocation of calcium from the cytosol out of the cell, into the endoplasmic reticulum, or into organelles. This Oryza sativa subsp. japonica (Rice) protein is Probable calcium-transporting ATPase 9, plasma membrane-type.